The primary structure comprises 181 residues: Protein TrbB (181 aa).

A signal peptide spans Met-1–Thr-22. The region spanning Thr-37 to Gln-172 is the Thioredoxin domain.

The protein resides in the periplasm. The protein is Protein TrbB (trbB) of Escherichia coli (strain K12).